The following is a 182-amino-acid chain: MSKQHTAQAPVDPIVLGKMGSSYGIRGWLRVFSSTEDAESIFDYQPWLIQKAGQWQVVELEGWRHHNQDIIIKLKGVDDRDAANLLTNCEIIVDSSQLPELEEGDYYWKDLMGCQVVTTEGYSLGKVIDMMETGSNDVLVIKANLKDAFGIKERLVPFLDGQVIKKVDLTTRTIEVDWDPGF.

The 81-residue stretch at 102–182 (EEGDYYWKDL…TIEVDWDPGF (81 aa)) folds into the PRC barrel domain.

Belongs to the RimM family. As to quaternary structure, binds ribosomal protein uS19.

Its subcellular location is the cytoplasm. In terms of biological role, an accessory protein needed during the final step in the assembly of 30S ribosomal subunit, possibly for assembly of the head region. Essential for efficient processing of 16S rRNA. May be needed both before and after RbfA during the maturation of 16S rRNA. It has affinity for free ribosomal 30S subunits but not for 70S ribosomes. In Klebsiella pneumoniae (strain 342), this protein is Ribosome maturation factor RimM.